The primary structure comprises 874 residues: Chaperone protein ClpB 1 (874 aa).

The Clp R domain maps to 6 to 148 (PNQFTEKAWE…RQIIQQIRGS (143 aa)). Repeat regions lie at residues 9 to 73 (FTEK…IARQ) and 85 to 148 (LGRS…IRGS). The tract at residues 161-342 (EALEKYGRDL…RRFQQVFVDQ (182 aa)) is NBD1. 208 to 215 (GEPGVGKT) contributes to the ATP binding site. The linker stretch occupies residues 343 to 551 (PTVEDTISIL…IAEIISKWTG (209 aa)). Residues 393-527 (IDLVDESAAR…MEGGLATTHT (135 aa)) adopt a coiled-coil conformation. Residues 561-772 (EMQKLLNLDE…RVDETIIFHS (212 aa)) form an NBD2 region. 611–618 (GPTGVGKT) provides a ligand contact to ATP. Positions 773-874 (LRKDQLQQIV…IATPTAVPLS (102 aa)) are C-terminal.

It belongs to the ClpA/ClpB family. Homohexamer. The oligomerization is ATP-dependent.

It localises to the cytoplasm. Functionally, part of a stress-induced multi-chaperone system, it is involved in the recovery of the cell from heat-induced damage, in cooperation with DnaK, DnaJ and GrpE. Acts before DnaK, in the processing of protein aggregates. Protein binding stimulates the ATPase activity; ATP hydrolysis unfolds the denatured protein aggregates, which probably helps expose new hydrophobic binding sites on the surface of ClpB-bound aggregates, contributing to the solubilization and refolding of denatured protein aggregates by DnaK. Necessary for thermotolerance. The chain is Chaperone protein ClpB 1 (clpB1) from Synechococcus elongatus (strain ATCC 33912 / PCC 7942 / FACHB-805) (Anacystis nidulans R2).